The following is a 180-amino-acid chain: 3-hydroxyanthranilate 3,4-dioxygenase (180 aa).

Arg-44 contributes to the O2 binding site. Fe cation-binding residues include His-48, Glu-54, and His-92. Glu-54 serves as a coordination point for substrate. Substrate-binding residues include Arg-96 and Glu-106. A divalent metal cation-binding residues include Cys-121, Cys-124, Cys-158, and Cys-161.

It belongs to the 3-HAO family. The cofactor is Fe(2+).

It localises to the cytoplasm. It carries out the reaction 3-hydroxyanthranilate + O2 = (2Z,4Z)-2-amino-3-carboxymuconate 6-semialdehyde. It functions in the pathway cofactor biosynthesis; NAD(+) biosynthesis; quinolinate from L-kynurenine: step 3/3. Functionally, catalyzes the oxidative ring opening of 3-hydroxyanthranilate to 2-amino-3-carboxymuconate semialdehyde, which spontaneously cyclizes to quinolinate. The chain is 3-hydroxyanthranilate 3,4-dioxygenase (bna1) from Neurospora crassa (strain ATCC 24698 / 74-OR23-1A / CBS 708.71 / DSM 1257 / FGSC 987).